The chain runs to 411 residues: MPLFSLVLLILGLHCAPPNSCEGKITSCLSPQQNATLYKMSSINADFAFNLYRRFTVEIPDQNIFFSPVSIPAGLAMLSLGACSSTQTQILEGLGFNLTDTPVAEIQQGFQHLICSLNFPKKELELQMGNALFIGKQLKPLEKFLDDVKNLYETEVFSTDFSNVSAAQQEINSHVEKQTKGKIVGLIQDLKPNTITVLVNYLCFKAQWANPFDPSKTEEGSSFLVDKTTTVQVPMMHQMEQYYHLVDTELNCTVLQMDYSKNALALFVLPKEGQMEWVEGAMSSKTLKKWNRLLRKGWVDLFVPKFSISATYDLGDILLKMGIQDAFADNADFSGLTKDNGLKVSNVAHKAMFYIGEKGTEAVPEVRFLNQPETTLLHPIIQFDRSFLLLILEKNTRSILFLGKVVDPTEA.

The N-terminal stretch at 1–15 (MPLFSLVLLILGLHC) is a signal peptide. Residues Asn-34, Asn-97, Asn-163, and Asn-251 are each glycosylated (N-linked (GlcNAc...) asparagine). Asn-291 and Lys-394 together coordinate thyroxine.

The protein belongs to the serpin family. As to expression, expressed by the liver and secreted in plasma.

It is found in the secreted. Functionally, major thyroid hormone transport protein in serum. In Bos taurus (Bovine), this protein is Thyroxine-binding globulin (SERPINA7).